A 605-amino-acid polypeptide reads, in one-letter code: DNA primase (605 aa).

The CHC2-type zinc finger occupies 37-61 (CPFHADKNPSMHINPIKGFYHCFAC). Residues 248-329 (KEIIVCEGYM…DGKVAILQGG (82 aa)) enclose the Toprim domain. Residues Glu254, Asp298, and Asp300 each contribute to the Mg(2+) site.

Belongs to the DnaG primase family. Monomer. Interacts with DnaB. Zn(2+) serves as cofactor. Mg(2+) is required as a cofactor.

The enzyme catalyses ssDNA + n NTP = ssDNA/pppN(pN)n-1 hybrid + (n-1) diphosphate.. In terms of biological role, RNA polymerase that catalyzes the synthesis of short RNA molecules used as primers for DNA polymerase during DNA replication. The sequence is that of DNA primase from Campylobacter jejuni subsp. jejuni serotype O:2 (strain ATCC 700819 / NCTC 11168).